A 296-amino-acid chain; its full sequence is 4-hydroxybenzoate octaprenyltransferase (296 aa).

A run of 8 helical transmembrane segments spans residues 28–48 (PIGIYLLLWPTLWAVWIAGKG), 52–72 (LKTVFIFVVGVFLMRAAGCVI), 102–122 (ALALFAVLVGLSFVLVLFTNA), 146–166 (YYPQVVLGAAFSWGMPMAFTA), 169–189 (GDLPAAAWLLYIANLLWTVGY), 219–239 (VIILTLQGLALGCLMLAGARF), 241–261 (LGACFYIGLLAAAGCFAWEFW), and 275–295 (FLHNHWAGLAIFLGIVADYAV).

Belongs to the UbiA prenyltransferase family. It depends on Mg(2+) as a cofactor.

The protein resides in the cell inner membrane. It carries out the reaction all-trans-octaprenyl diphosphate + 4-hydroxybenzoate = 4-hydroxy-3-(all-trans-octaprenyl)benzoate + diphosphate. The protein operates within cofactor biosynthesis; ubiquinone biosynthesis. Catalyzes the prenylation of para-hydroxybenzoate (PHB) with an all-trans polyprenyl group. Mediates the second step in the final reaction sequence of ubiquinone-8 (UQ-8) biosynthesis, which is the condensation of the polyisoprenoid side chain with PHB, generating the first membrane-bound Q intermediate 3-octaprenyl-4-hydroxybenzoate. This is 4-hydroxybenzoate octaprenyltransferase from Pseudomonas savastanoi pv. phaseolicola (strain 1448A / Race 6) (Pseudomonas syringae pv. phaseolicola (strain 1448A / Race 6)).